The primary structure comprises 414 residues: Gamma-glutamyl phosphate reductase (414 aa).

Belongs to the gamma-glutamyl phosphate reductase family.

Its subcellular location is the cytoplasm. It catalyses the reaction L-glutamate 5-semialdehyde + phosphate + NADP(+) = L-glutamyl 5-phosphate + NADPH + H(+). Its pathway is amino-acid biosynthesis; L-proline biosynthesis; L-glutamate 5-semialdehyde from L-glutamate: step 2/2. In terms of biological role, catalyzes the NADPH-dependent reduction of L-glutamate 5-phosphate into L-glutamate 5-semialdehyde and phosphate. The product spontaneously undergoes cyclization to form 1-pyrroline-5-carboxylate. This Francisella philomiragia subsp. philomiragia (strain ATCC 25017 / CCUG 19701 / FSC 153 / O#319-036) protein is Gamma-glutamyl phosphate reductase.